Here is a 211-residue protein sequence, read N- to C-terminus: Transcriptional regulatory protein LiaR (211 aa).

One can recognise a Response regulatory domain in the interval 3 to 119 (RVLLIDDHEM…EIADAIRAAS (117 aa)). 4-aspartylphosphate is present on D54. One can recognise an HTH luxR-type domain in the interval 143–208 (NALPHESLTK…QAAVYAHRNH (66 aa)). The segment at residues 167–186 (NKEIGEELFITIKTVKTHIT) is a DNA-binding region (H-T-H motif).

Post-translationally, phosphorylated by LiaS.

It is found in the cytoplasm. Member of the two-component regulatory system LiaS/LiaR probably involved in response to a subset of cell wall-active antibiotics that interfere with the lipid II cycle in the cytoplasmic membrane (bacitracin, nisin, ramoplanin and vancomycin). Also seems to be involved in response to cationic antimicrobial peptides and secretion stress. LiaR regulates the transcription of the liaIHGFSR operon. The sequence is that of Transcriptional regulatory protein LiaR (liaR) from Bacillus subtilis (strain 168).